Consider the following 353-residue polypeptide: Uroporphyrinogen decarboxylase (353 aa).

Residues 29–33 (RQAGR), aspartate 79, tyrosine 156, threonine 211, and histidine 329 each bind substrate.

The protein belongs to the uroporphyrinogen decarboxylase family. In terms of assembly, homodimer.

The protein resides in the cytoplasm. It carries out the reaction uroporphyrinogen III + 4 H(+) = coproporphyrinogen III + 4 CO2. The protein operates within porphyrin-containing compound metabolism; protoporphyrin-IX biosynthesis; coproporphyrinogen-III from 5-aminolevulinate: step 4/4. Its function is as follows. Catalyzes the decarboxylation of four acetate groups of uroporphyrinogen-III to yield coproporphyrinogen-III. This chain is Uroporphyrinogen decarboxylase, found in Alcanivorax borkumensis (strain ATCC 700651 / DSM 11573 / NCIMB 13689 / SK2).